Reading from the N-terminus, the 404-residue chain is Glucose-1-phosphate adenylyltransferase (404 aa).

Alpha-D-glucose 1-phosphate-binding positions include Tyr99, Gly164, 179–180, and Ser197; that span reads EK.

Belongs to the bacterial/plant glucose-1-phosphate adenylyltransferase family. Homotetramer.

The enzyme catalyses alpha-D-glucose 1-phosphate + ATP + H(+) = ADP-alpha-D-glucose + diphosphate. It participates in glycan biosynthesis; glycogen biosynthesis. Its function is as follows. Involved in the biosynthesis of ADP-glucose, a building block required for the elongation reactions to produce glycogen. Catalyzes the reaction between ATP and alpha-D-glucose 1-phosphate (G1P) to produce pyrophosphate and ADP-Glc. The protein is Glucose-1-phosphate adenylyltransferase of Rhodococcus erythropolis (strain PR4 / NBRC 100887).